Consider the following 1733-residue polypeptide: MGQTVTTPLSLTLDHWKDVERTAHNQSVDVKKRRWVTFCSVEWPTFNVGWPQDGTFNRDIITQVKIKVFSPGPHGHPDQVPYIVTWEALAFDPPPWVKPFVHPKPPLPPSAPSLLPEPPLSTSPRSSLYPALTPSLGAKPKPQVLPDSGGPLIDLLTEDPPPYRDPGPPPSDRDRDDGEAAPAGEAPDPSPMASRLRGRRELPVADSTTSQAFPLRSGGNGQLQYWPFSSSDLYNWKNNNPSFSEDPGKLTALIESVLLTHQPTWDDCQQLLGTLLTGEEKQRVLLEARKAVRGEDGRPTQLPNEINDAFPLERPDWDYNTQRGRNHLVLYRQLLLAGLQNAGRSPTNLAKVKGITQGPNESPSAFLERLKEAYRRYTPYDPEDPGQETNVSMSFIWQSAPDIGRKLERLEDLKSKTLGDLVREAEKIFNKRETPEEREERIKRETEEKEERRRAEDEQKEKERDRRRHREMSKLLATVVSGQKQDRQGGERRRPQLDKDQCAYCKEKGHWAKDCPKKPRGPRGPRPQTSLLALDDQGGRGQEPPPEPRITLKVGGQPVTFLVDTGAQHSVLTQNPGPLSDKSAWVQGATGGKRYRWTTDRKVHLATGKVTHSFLHVPDCPYPLLGRDLLTKLNAQIHFEGSGAQVVGPRGQPLQVLTLNIEDEYRLHETSKEPDVSLGSTWLSDFPQAWAETGGMGLAVRQAPLIIPLKATSTPVSIKQYPMSQEARLGIKPHIQRLLDQGILVPCQSPWNTPLLPVKKPGTNDYRPVQDLREVNKRVEDIHPTVPNPYNLLSGLPPSHQWYTVLDLKDAFFCLRLHPTSQPLFAFEWRDPEMGISGQLTWTRLPQGFKNSPTLFDEALHRDLAGFRIQHPDLILLQYVDDLLLAATSELDCQQGTRALLQTLGDLGYRASAKKAQICQKQVKYLGYLLKEGQRWLTEARKETVMGQPIPKTPRQLREFLGTAGFCRLWIPGFAEMAAPLYPLTKTGTLFNWGPDQQKAFQEIKQALLTAPALGLPDLTKPFELFVDEKQGYAKGVLTQKLGPWRRPVAYLSKKLDPVAAGWPPCLRMVAAIAVLTKDAGKLTMGQPLVILAPHAVEALVKQPPDRWLSNARMTHYQALLLDTDRVQFGPVVALNPATLLPLPEEGLQHDCLDILAEAHGTRSDLMDQPLPDADHTWYTDGSSFLQEGQRKAGAAVTTETEVIWARALPAGTSAQRAELIALTQALKMAEGKKLNVYTDSRYAFATAHIHGEIYRRRGLLTSEGKEIKNKDEILALLKALFLPKRLSIIHCPGHQKGNSAEARGNRMADQAAREVATRETPETSTLLIENSTPYTHEHFHYTVTDTKDLTKLGATYDSAKKYWVYQGKPVMPDQFTFELLDFLHQLTHLSFSKTKALLERSPSPYYMLNRDRTLKNITETCKACAQVNASKSAVKQGTRVRGHRPGTHWEIDFTEVKPGLYGYKYLLVFVDTFSGWIEAFPTKKETAKVVTKKLLEEIFPRFGMPQVLGTDNGPAFVSKVSQTVADLLGIDWKLHCAYRPQSSGQVERMNRTIKETLTKLTLATGSRDWVLLLPLALYRARNTPGPHGLTPYEILYGAPPPLVNFPDPDMTRVTNSPSLQAHLQALYLVQHEVWRPLAAAYQEQLDRPVVPHPYRVGDTVWVRRHQTKNLEPRWKGPYTVLLTTPTALKVDGISAWVHAAHVKAATTSPARTAWKVQRSQNPLKIRLSREPS.

Glycine 2 is lipidated: N-myristoyl glycine; by host. A PTAP/PSAP motif motif is present at residues 109 to 112; the sequence is PSAP. Positions 112-121 are enriched in pro residues; the sequence is PSLLPEPPLS. 2 disordered regions span residues 112 to 196 and 202 to 221; these read PSLL…ASRL and LPVA…GGNG. The LYPX(n)L motif signature appears at 128-132; the sequence is LYPAL. Residues 159–170 are compositionally biased toward pro residues; sequence DPPPYRDPGPPP. The PPXY motif motif lies at 160–163; that stretch reads PPPY. At serine 190 the chain carries Phosphoserine; by host. The interaction with host PIAS4 stretch occupies residues 343-391; sequence GRSPTNLAKVKGITQGPNESPSAFLERLKEAYRRYTPYDPEDPGQETNV. Positions 428-433 are interaction with host UBE2I; the sequence is IFNKRE. 2 stretches are compositionally biased toward basic and acidic residues: residues 432–464 and 484–496; these read RETP…EKER and KQDR…RRPQ. 2 disordered regions span residues 432–496 and 511–550; these read RETP…RRPQ and WAKD…EPRI. The stretch at 436 to 476 forms a coiled coil; the sequence is EEREERIKRETEEKEERRRAEDEQKEKERDRRRHREMSKLL. A CCHC-type zinc finger spans residues 500-517; it reads DQCAYCKEKGHWAKDCPK. In terms of domain architecture, Peptidase A2 spans 559-629; that stretch reads VTFLVDTGAQ…CPYPLLGRDL (71 aa). The Protease; shared with dimeric partner role is filled by aspartate 564. The Reverse transcriptase domain maps to 739 to 930; the sequence is LDQGILVPCQ…KQVKYLGYLL (192 aa). Positions 807, 881, 882, 1181, 1219, 1240, and 1310 each coordinate Mg(2+). In terms of domain architecture, RNase H type-1 spans 1172 to 1318; the sequence is PDADHTWYTD…ADQAAREVAT (147 aa). The segment at 1385–1425 adopts an HHCC-type zinc-finger fold; that stretch reads HQLTHLSFSKTKALLERSPSPYYMLNRDRTLKNITETCKAC. The Integrase catalytic domain maps to 1442–1600; sequence RGHRPGTHWE…TPYEILYGAP (159 aa). Mg(2+)-binding residues include aspartate 1453 and aspartate 1512.

Homohexamer; further associates as homomultimer. The virus core is composed of a lattice formed from hexagonal rings, each containing six capsid monomers. Interacts with mouse UBE2I and mouse PIAS4. In terms of assembly, interacts (via PPXY motif) with host NEDD4. Interacts (via PSAP motif) with host TSG101. Interacts (via LYPX(n)L motif) with host PDCD6IP. As to quaternary structure, the reverse transcriptase is a monomer (Potential). Interacts (via RNase domains) with host release factor ETF1; this interaction is essential for translational readthrough of amber codon between viral gag and pol genes, as well as for viral replication. Homodimer. The cofactor is Mg(2+). Ubiquitinated by ITCH. Gag can recruit the ubiquitin ligase Itch in an L domain-independent manner to facilitate virus release via a mechanism that involves Gag ubiquitination. Post-translationally, specific enzymatic cleavages by the viral protease yield mature proteins. The protease is released by autocatalytic cleavage. The polyprotein is cleaved during and after budding, this process is termed maturation. In terms of processing, sumoylated; which is required for virus replication. Phosphorylated on serine residues.

It is found in the virion. It localises to the host cell membrane. The protein resides in the host late endosome membrane. Its subcellular location is the host endosome. The protein localises to the host multivesicular body. It is found in the host cytoplasm. The catalysed reaction is DNA(n) + a 2'-deoxyribonucleoside 5'-triphosphate = DNA(n+1) + diphosphate. It catalyses the reaction Endonucleolytic cleavage to 5'-phosphomonoester.. With respect to regulation, most efficiently inhibited by Amprenavir, which is able to block Gag-Pol processing in infected cells. In terms of biological role, plays a role in budding and is processed by the viral protease during virion maturation outside the cell. During budding, it recruits, in a PPXY-dependent or independent manner, Nedd4-like ubiquitin ligases that conjugate ubiquitin molecules to Gag-Pol, or to Gag-Pol binding host factors. Interaction with HECT ubiquitin ligases probably links the viral protein to the host ESCRT pathway and facilitates release. Its function is as follows. Targets Gag and gag-pol polyproteins to the plasma membrane via a multipartite membrane binding signal, that includes its myristoylated N-terminus. Also mediates nuclear localization of the pre-integration complex. Functionally, constituent of the pre-integration complex (PIC) which tethers the latter to mitotic chromosomes. This allows the integration of the viral genome into the host DNA. Forms the spherical core of the virion that encapsulates the genomic RNA-nucleocapsid complex. In terms of biological role, involved in the packaging and encapsidation of two copies of the genome. Binds with high affinity to conserved UCUG elements within the packaging signal, located near the 5'-end of the genome. This binding is dependent on genome dimerization. Acts as a nucleic acid chaperone which is involved in rearrangement of nucleic acid secondary structures during gRNA retrotranscription. Its function is as follows. The aspartyl protease mediates proteolytic cleavages of Gag and Gag-Pol polyproteins during or shortly after the release of the virion from the plasma membrane. Cleavages take place as an ordered, step-wise cascade to yield mature proteins. This process is called maturation. Displays maximal activity during the budding process just prior to particle release from the cell (Potential). Cleaves the translation initiation factor eIF4G leading to the inhibition of host cap-dependent translation. Functionally, RT is a multifunctional enzyme that converts the viral dimeric RNA genome into dsDNA in the cytoplasm, shortly after virus entry into the cell. This enzyme displays a DNA polymerase activity that can copy either DNA or RNA templates, and a ribonuclease H (RNase H) activity that cleaves the RNA strand of RNA-DNA heteroduplexes in a partially processive 3' to 5' endonucleasic mode. Conversion of viral genomic RNA into dsDNA requires many steps. A tRNA binds to the primer-binding site (PBS) situated at the 5' end of the viral RNA. RT uses the 3' end of the tRNA primer to perform a short round of RNA-dependent minus-strand DNA synthesis. The reading proceeds through the U5 region and ends after the repeated (R) region which is present at both ends of viral RNA. The portion of the RNA-DNA heteroduplex is digested by the RNase H, resulting in a ssDNA product attached to the tRNA primer. This ssDNA/tRNA hybridizes with the identical R region situated at the 3' end of viral RNA. This template exchange, known as minus-strand DNA strong stop transfer, can be either intra- or intermolecular. RT uses the 3' end of this newly synthesized short ssDNA to perform the RNA-dependent minus-strand DNA synthesis of the whole template. RNase H digests the RNA template except for a polypurine tract (PPT) situated at the 5' end of the genome. It is not clear if both polymerase and RNase H activities are simultaneous. RNase H probably can proceed both in a polymerase-dependent (RNA cut into small fragments by the same RT performing DNA synthesis) and a polymerase-independent mode (cleavage of remaining RNA fragments by free RTs). Secondly, RT performs DNA-directed plus-strand DNA synthesis using the PPT that has not been removed by RNase H as primers. PPT and tRNA primers are then removed by RNase H. The 3' and 5' ssDNA PBS regions hybridize to form a circular dsDNA intermediate. Strand displacement synthesis by RT to the PBS and PPT ends produces a blunt ended, linear dsDNA copy of the viral genome that includes long terminal repeats (LTRs) at both ends. Catalyzes viral DNA integration into the host chromosome, by performing a series of DNA cutting and joining reactions. This enzyme activity takes place after virion entry into a cell and reverse transcription of the RNA genome in dsDNA. The first step in the integration process is 3' processing. This step requires a complex comprising the viral genome, matrix protein and integrase. This complex is called the pre-integration complex (PIC). The integrase protein removes 2 nucleotides from each 3' end of the viral DNA, leaving recessed CA OH's at the 3' ends. In the second step that requires cell division, the PIC enters cell nucleus. In the third step, termed strand transfer, the integrase protein joins the previously processed 3' ends to the 5' ends of strands of target cellular DNA at the site of integration. The last step is viral DNA integration into host chromosome. This Cas-Br-E murine leukemia virus protein is Gag-Pol polyprotein (gag-pol).